The primary structure comprises 119 residues: Large ribosomal subunit protein bL20 (119 aa).

It belongs to the bacterial ribosomal protein bL20 family.

Its function is as follows. Binds directly to 23S ribosomal RNA and is necessary for the in vitro assembly process of the 50S ribosomal subunit. It is not involved in the protein synthesizing functions of that subunit. This chain is Large ribosomal subunit protein bL20, found in Colwellia psychrerythraea (strain 34H / ATCC BAA-681) (Vibrio psychroerythus).